Consider the following 164-residue polypeptide: tRNA (cytidine(34)-2'-O)-methyltransferase (164 aa).

S-adenosyl-L-methionine-binding residues include Met-80, Gly-102, Val-124, and Ser-132.

This sequence belongs to the class IV-like SAM-binding methyltransferase superfamily. RNA methyltransferase TrmH family. TrmL subfamily. In terms of assembly, homodimer.

The protein resides in the cytoplasm. The catalysed reaction is cytidine(34) in tRNA + S-adenosyl-L-methionine = 2'-O-methylcytidine(34) in tRNA + S-adenosyl-L-homocysteine + H(+). It carries out the reaction 5-carboxymethylaminomethyluridine(34) in tRNA(Leu) + S-adenosyl-L-methionine = 5-carboxymethylaminomethyl-2'-O-methyluridine(34) in tRNA(Leu) + S-adenosyl-L-homocysteine + H(+). Methylates the ribose at the nucleotide 34 wobble position in the two leucyl isoacceptors tRNA(Leu)(CmAA) and tRNA(Leu)(cmnm5UmAA). Catalyzes the methyl transfer from S-adenosyl-L-methionine to the 2'-OH of the wobble nucleotide. In Polaromonas sp. (strain JS666 / ATCC BAA-500), this protein is tRNA (cytidine(34)-2'-O)-methyltransferase.